A 467-amino-acid polypeptide reads, in one-letter code: ATP synthase subunit beta (467 aa).

ATP is bound at residue 150–157; it reads GGAGVGKT.

Belongs to the ATPase alpha/beta chains family. F-type ATPases have 2 components, CF(1) - the catalytic core - and CF(0) - the membrane proton channel. CF(1) has five subunits: alpha(3), beta(3), gamma(1), delta(1), epsilon(1). CF(0) has three main subunits: a(1), b(2) and c(9-12). The alpha and beta chains form an alternating ring which encloses part of the gamma chain. CF(1) is attached to CF(0) by a central stalk formed by the gamma and epsilon chains, while a peripheral stalk is formed by the delta and b chains.

The protein localises to the cell inner membrane. The enzyme catalyses ATP + H2O + 4 H(+)(in) = ADP + phosphate + 5 H(+)(out). Produces ATP from ADP in the presence of a proton gradient across the membrane. The catalytic sites are hosted primarily by the beta subunits. This Polaromonas sp. (strain JS666 / ATCC BAA-500) protein is ATP synthase subunit beta.